The following is a 331-amino-acid chain: Meiotic recombination protein W68 (331 aa).

A Topo IIA-type catalytic domain is found at 1–120; sequence MDEFSENIER…LGILAASKGL (120 aa). Catalysis depends on Y81, which acts as the O-(5'-phospho-DNA)-tyrosine intermediate. Mg(2+) is bound by residues E167 and D221.

The protein belongs to the TOP6A family. Mg(2+) is required as a cofactor.

The protein localises to the nucleus. It catalyses the reaction ATP-dependent breakage, passage and rejoining of double-stranded DNA.. Functionally, required for meiotic recombination. Together with mei-P22, mediates DNA cleavage that forms the double-strand breaks (DSB) that initiate meiotic recombination. The polypeptide is Meiotic recombination protein W68 (Drosophila melanogaster (Fruit fly)).